Here is a 94-residue protein sequence, read N- to C-terminus: Co-chaperonin GroES (94 aa).

Belongs to the GroES chaperonin family. As to quaternary structure, heptamer of 7 subunits arranged in a ring. Interacts with the chaperonin GroEL.

It is found in the cytoplasm. Functionally, together with the chaperonin GroEL, plays an essential role in assisting protein folding. The GroEL-GroES system forms a nano-cage that allows encapsulation of the non-native substrate proteins and provides a physical environment optimized to promote and accelerate protein folding. GroES binds to the apical surface of the GroEL ring, thereby capping the opening of the GroEL channel. The chain is Co-chaperonin GroES from Orientia tsutsugamushi (Rickettsia tsutsugamushi).